Here is a 291-residue protein sequence, read N- to C-terminus: Protein ILRUN (291 aa).

A disordered region spans residues 199–291; that stretch reads NTQPHRKVEG…LHGPYPFGQS (93 aa). The segment covering 212-228 has biased composition (polar residues); sequence PFASPQKNRQSDENNLT. Phosphoserine occurs at positions 215, 222, and 265. Residues 257 to 276 are compositionally biased toward low complexity; that stretch reads LSQSSVNLSPSSPANNLSVV.

In terms of assembly, interacts with IRF3; the interaction inhibits IRF3 binding to its DNA consensus sequence.

The protein localises to the cytoplasm. It localises to the nucleus. Its function is as follows. Negative regulator of innate antiviral response. Blocks IRF3-dependent cytokine production such as IFNA, IFNB and TNF. Interacts with IRF3 and inhibits IRF3 recruitment to type I IFN promoter sequences while also reducing nuclear levels of the coactivators EP300 and CREBBP. This is Protein ILRUN from Mus musculus (Mouse).